We begin with the raw amino-acid sequence, 353 residues long: Delta-aminolevulinic acid dehydratase (353 aa).

Lys221 (schiff-base intermediate with substrate) is an active-site residue. 5-aminolevulinate is bound by residues Arg231 and Lys244. Residue Glu260 coordinates Mg(2+). Lys275 (schiff-base intermediate with substrate) is an active-site residue. 5-aminolevulinate-binding residues include Ser301 and Tyr340.

Belongs to the ALAD family. As to quaternary structure, homooctamer. Mg(2+) is required as a cofactor.

It carries out the reaction 2 5-aminolevulinate = porphobilinogen + 2 H2O + H(+). It functions in the pathway porphyrin-containing compound metabolism; protoporphyrin-IX biosynthesis; coproporphyrinogen-III from 5-aminolevulinate: step 1/4. Catalyzes an early step in the biosynthesis of tetrapyrroles. Binds two molecules of 5-aminolevulinate per subunit, each at a distinct site, and catalyzes their condensation to form porphobilinogen. Required for nodule development. This Bradyrhizobium diazoefficiens (strain JCM 10833 / BCRC 13528 / IAM 13628 / NBRC 14792 / USDA 110) protein is Delta-aminolevulinic acid dehydratase (hemB).